The primary structure comprises 436 residues: Prenyltransferase nscD (436 aa).

It belongs to the tryptophan dimethylallyltransferase family.

Its pathway is secondary metabolite biosynthesis. Its function is as follows. Prenyltransferase; part of the gene cluster that mediates the biosynthesis of neosartoricin B, a prenylated anthracenone that probably exhibits T-cell antiproliferative activity, suggestive of a physiological role as an immunosuppressive agent. The non-reducing polyketide synthase nscA probably synthesizes and cyclizes the decaketide backbone. The hydrolase nscB then mediates the product release through hydrolysis followed by spontaneous decarboxylation. The prenyltransferase nscD catalyzes the addition of the dimethylallyl group to the aromatic C5. The FAD-dependent monooxygenase nscC is then responsible for the stereospecific hydroxylation at C2. Neosartoricin B can be converted into two additional compounds neosartoricins C and D. Neosartoricin C is a spirocyclic compound that is cyclized through the attack of C3 hydroxyl on C14, followed by dehydration. On the other hand, neosartoricin D is a further cyclized compound in which attack of C2 on C14 in neosartoricin C results in the formation of the acetal-containing dioxabicyclo-octanone ring. Both of these compounds are novel and possibly represent related metabolites of the gene cluster. The chain is Prenyltransferase nscD from Trichophyton tonsurans (strain CBS 112818) (Scalp ringworm fungus).